Consider the following 100-residue polypeptide: Urease subunit gamma (100 aa).

The protein belongs to the urease gamma subunit family. In terms of assembly, heterotrimer of UreA (gamma), UreB (beta) and UreC (alpha) subunits. Three heterotrimers associate to form the active enzyme.

The protein localises to the cytoplasm. The enzyme catalyses urea + 2 H2O + H(+) = hydrogencarbonate + 2 NH4(+). Its pathway is nitrogen metabolism; urea degradation; CO(2) and NH(3) from urea (urease route): step 1/1. In Cupriavidus necator (strain ATCC 17699 / DSM 428 / KCTC 22496 / NCIMB 10442 / H16 / Stanier 337) (Ralstonia eutropha), this protein is Urease subunit gamma.